Here is a 254-residue protein sequence, read N- to C-terminus: MTEIRYVRLLTLVLASSVLLAGCSSAVPTTPVRSATPSAAATPTATPVVPPTVNPAATASLHAAARSGDAEAVRSALAAGAAIEDRGEGGRTPLVEAAKGNHVEAARALIEAGADVNAKDDIQDSAYLYAGAEGYLEILRMTLTTGADVNAKNRFNGTALIPASEHAHTEVVRMLIAAGVDLDHVNTPGWTAMQEAIVLGNGGAGAQDVVRQLLAAGANPDIRDSRGRTSLCNATRLGFGAIASQLRAAGATGC.

Residues 1-22 (MTEIRYVRLLTLVLASSVLLAG) form the signal peptide. C23 carries N-palmitoyl cysteine lipidation. The S-diacylglycerol cysteine moiety is linked to residue C23. ANK repeat units lie at residues 56 to 85 (AATASLHAAARSGDAEAVRSALAAGAAIED), 89 to 118 (GGRTPLVEAAKGNHVEAARALIEAGADVNA), 122 to 151 (IQDSAYLYAGAEGYLEILRMTLTTGADVNA), 155 to 184 (FNGTALIPASEHAHTEVVRMLIAAGVDLDH), and 188 to 222 (PGWTAMQEAIVLGNGGAGAQDVVRQLLAAGANPDI).

Its subcellular location is the cell membrane. In Leifsonia xyli subsp. xyli (strain CTCB07), this protein is Putative ankyrin-containing lipoprotein Lxx09580.